The following is a 256-amino-acid chain: Hydroxyacylglutathione hydrolase (256 aa).

Residues H57, H59, D61, H62, H115, D134, and H172 each contribute to the Zn(2+) site.

This sequence belongs to the metallo-beta-lactamase superfamily. Glyoxalase II family. In terms of assembly, monomer. Zn(2+) serves as cofactor.

It carries out the reaction an S-(2-hydroxyacyl)glutathione + H2O = a 2-hydroxy carboxylate + glutathione + H(+). It functions in the pathway secondary metabolite metabolism; methylglyoxal degradation; (R)-lactate from methylglyoxal: step 2/2. In terms of biological role, thiolesterase that catalyzes the hydrolysis of S-D-lactoyl-glutathione to form glutathione and D-lactic acid. The polypeptide is Hydroxyacylglutathione hydrolase (Rhizobium johnstonii (strain DSM 114642 / LMG 32736 / 3841) (Rhizobium leguminosarum bv. viciae)).